A 365-amino-acid chain; its full sequence is UDP-N-acetylglucosamine--N-acetylmuramyl-(pentapeptide) pyrophosphoryl-undecaprenol N-acetylglucosamine transferase (365 aa).

UDP-N-acetyl-alpha-D-glucosamine contacts are provided by residues 17–19 (TGG), asparagine 129, arginine 167, serine 194, isoleucine 250, 269–274 (ALTVSE), and glutamine 295.

Belongs to the glycosyltransferase 28 family. MurG subfamily.

The protein localises to the cell inner membrane. It carries out the reaction di-trans,octa-cis-undecaprenyl diphospho-N-acetyl-alpha-D-muramoyl-L-alanyl-D-glutamyl-meso-2,6-diaminopimeloyl-D-alanyl-D-alanine + UDP-N-acetyl-alpha-D-glucosamine = di-trans,octa-cis-undecaprenyl diphospho-[N-acetyl-alpha-D-glucosaminyl-(1-&gt;4)]-N-acetyl-alpha-D-muramoyl-L-alanyl-D-glutamyl-meso-2,6-diaminopimeloyl-D-alanyl-D-alanine + UDP + H(+). It participates in cell wall biogenesis; peptidoglycan biosynthesis. Its function is as follows. Cell wall formation. Catalyzes the transfer of a GlcNAc subunit on undecaprenyl-pyrophosphoryl-MurNAc-pentapeptide (lipid intermediate I) to form undecaprenyl-pyrophosphoryl-MurNAc-(pentapeptide)GlcNAc (lipid intermediate II). The chain is UDP-N-acetylglucosamine--N-acetylmuramyl-(pentapeptide) pyrophosphoryl-undecaprenol N-acetylglucosamine transferase from Shewanella sediminis (strain HAW-EB3).